A 568-amino-acid polypeptide reads, in one-letter code: C6 finger domain transcription factor BOA13 (568 aa).

Residues 14–41 (CNECHASKVRCSGERTGCRRCVYNQQKC) constitute a DNA-binding region (zn(2)-C6 fungal-type). 3 disordered regions span residues 92–114 (EANGNDLNSKPNDVPVESSEGIT), 207–278 (ATSS…HHNH), and 467–490 (RSRSLSTPSPRNTPSTSNSPFSNP). The segment covering 242 to 259 (HSDLSEKQAQHAQNDLRW) has biased composition (basic and acidic residues). Residues 260 to 274 (RSQSQSYKRPTISTQ) show a composition bias toward polar residues. Positions 470–490 (SLSTPSPRNTPSTSNSPFSNP) are enriched in low complexity.

It localises to the nucleus. Functionally, transcription factor that probably regulates the gene clusters that mediates the biosynthesis of botcinin acid and its botcinin derivatives, acetate-derived polyketides that contribute to virulence when combined with the sesquiterpene botrydial. Botcinin acid and its derivatives have been shown to induce chlorosis and necrosis during host plant infection, but also have antifungal activities. The protein is C6 finger domain transcription factor BOA13 of Botryotinia fuckeliana (strain B05.10) (Noble rot fungus).